The sequence spans 254 residues: MNITQIRNATIVVKYANKKFLIDPMLAEKGTYATFPETIRQDLFNPLVSLPTSIDNILDGVDAVIVTHLHLDHFDDVAKNVLPKNIKMFVQNEADAKEVKASGFKNVEVLHQDTVFEGIQLVKTKGEHGRGEELLNLMGDVCGLVFKHPSEKVLYVAGDTVWYDAIEDEIHTHQPEIIVVNGGDNQRLDLGSLIMGKEDIYEVHKAAPHAKIISVHMEAVNHWTLSREELKNFSKEKGFSSNILVPEDGESYTF.

The protein belongs to the UPF0173 family.

The chain is UPF0173 protein YddR (yddR) from Bacillus subtilis (strain 168).